The following is a 90-amino-acid chain: Probable Fe(2+)-trafficking protein (90 aa).

The protein belongs to the Fe(2+)-trafficking protein family. As to quaternary structure, monomer.

Functionally, could be a mediator in iron transactions between iron acquisition and iron-requiring processes, such as synthesis and/or repair of Fe-S clusters in biosynthetic enzymes. This Yersinia pseudotuberculosis serotype O:1b (strain IP 31758) protein is Probable Fe(2+)-trafficking protein.